We begin with the raw amino-acid sequence, 264 residues long: Agamous-like MADS-box protein AGL15 (264 aa).

Positions 3–57 constitute an MADS-box domain; sequence RGKIEIKRIENANSRQVTFSKRRAGLLKKAHELSVLCDAEVAVIVFSKSGKLFEF. The 91-residue stretch at 87 to 177 folds into the K-box domain; sequence NQEECTEVDL…RRQVQELRSF (91 aa). Residues 223 to 264 form a disordered region; the sequence is LQLGLPGEAHDTRKNEGDRESPSSDSVTTSTTRATAQRISLV. Residues 230-244 show a composition bias toward basic and acidic residues; the sequence is EAHDTRKNEGDRESP. The segment covering 245-257 has biased composition (low complexity); that stretch reads SSDSVTTSTTRAT.

It localises to the nucleus. In terms of biological role, probable transcription factor. This Brassica napus (Rape) protein is Agamous-like MADS-box protein AGL15 (AGL15).